Reading from the N-terminus, the 590-residue chain is Aspartate--tRNA(Asp/Asn) ligase (590 aa).

An L-aspartate-binding site is contributed by glutamate 176. The segment at glutamine 200–lysine 203 is aspartate. Positions 222 and 451 each coordinate L-aspartate. Arginine 222–glutamate 224 contributes to the ATP binding site. Glutamate 485 contributes to the ATP binding site. Arginine 492 contacts L-aspartate. Glycine 537–arginine 540 contributes to the ATP binding site.

It belongs to the class-II aminoacyl-tRNA synthetase family. Type 1 subfamily. In terms of assembly, homodimer.

It is found in the cytoplasm. It catalyses the reaction tRNA(Asx) + L-aspartate + ATP = L-aspartyl-tRNA(Asx) + AMP + diphosphate. Functionally, aspartyl-tRNA synthetase with relaxed tRNA specificity since it is able to aspartylate not only its cognate tRNA(Asp) but also tRNA(Asn). Reaction proceeds in two steps: L-aspartate is first activated by ATP to form Asp-AMP and then transferred to the acceptor end of tRNA(Asp/Asn). The polypeptide is Aspartate--tRNA(Asp/Asn) ligase (Ehrlichia ruminantium (strain Gardel)).